Consider the following 66-residue polypeptide: Large ribosomal subunit protein bL33c (66 aa).

It belongs to the bacterial ribosomal protein bL33 family.

The protein resides in the plastid. Its subcellular location is the chloroplast. The chain is Large ribosomal subunit protein bL33c from Acorus calamus (Sweet flag).